We begin with the raw amino-acid sequence, 553 residues long: MAVDPPKADPKGVAVDSSRRCPALGSREDQSAKAGGCCGSRDRVRRCIRANLLVLLTVAAVVAGVGLGLGVSAAGGADALGPARLTRFAFPGELLLRLLKMIILPLVVCSLIGGAASLDPSALGRVGAWALLFFLVTTLLASALGVGLALALKPGAAVTAITSINDSVVDPCARSAPTKEALDSFLDLVRNIFPSNLVSAAFRSFATSYEPKDNSCKIPQSCIQREINSTMVQLLCEVEGMNILGLVVFAIVFGVALRKLGPEGELLIRFFNSFNDATMVLVSWIMWYAPVGILFLVASKIVEMKDVRQLFISLGKYILCCLLGHAIHGLLVLPLIYFLFTRKNPYRFLWGIMTPLATAFGTSSSSATLPLMMKCVEEKNGVAKHISRFILPIGATVNMDGAALFQCVAAVFIAQLNGVSLDFVKIITILVTATASSVGAAGIPAGGVLTLAIILEAVSLPVKDISLILAVDWLVDRSCTVLNVEGDAFGAGLLQSYVDRTKMPSSEPELIQVKNEVSLNPLPLATEEGNPLLKQYQGPTGDSSATFEKESVM.

The residue at position 1 (methionine 1) is an N-acetylmethionine. Residues methionine 1 to alanine 50 lie on the Cytoplasmic side of the membrane. A helical membrane pass occupies residues asparagine 51–leucine 80. Over glycine 81–glutamate 93 the chain is Extracellular. The chain crosses the membrane as a helical span at residues leucine 94 to alanine 115. Residues alanine 116–tryptophan 129 lie on the Cytoplasmic side of the membrane. A helical transmembrane segment spans residues alanine 130–leucine 152. The Extracellular segment spans residues lysine 153–cysteine 236. N-linked (GlcNAc...) asparagine glycans are attached at residues asparagine 165 and asparagine 228. The helical transmembrane segment at glutamate 237 to leucine 260 threads the bilayer. Residues glycine 261–arginine 269 lie on the Cytoplasmic side of the membrane. Residues phenylalanine 270–valine 297 form a helical membrane-spanning segment. The Extracellular segment spans residues alanine 298–isoleucine 318. The helical transmembrane segment at leucine 319 to phenylalanine 340 threads the bilayer. Over threonine 341–proline 345 the chain is Cytoplasmic. An intramembrane region (discontinuously helical) is located at residues tyrosine 346 to valine 376. The Cytoplasmic portion of the chain corresponds to glutamate 377–histidine 385. The helical transmembrane segment at isoleucine 386–phenylalanine 412 threads the bilayer. The Na(+) site is built by glycine 394, threonine 396, and asparagine 398. The Extracellular segment spans residues isoleucine 413–lysine 425. Positions isoleucine 426–serine 459 form an intramembrane region, discontinuously helical. Residues leucine 460 to aspartate 472 are Extracellular-facing. The helical transmembrane segment at tryptophan 473–leucine 494 threads the bilayer. Residues asparagine 483 and aspartate 487 each coordinate Na(+). Residues glutamine 495–methionine 553 are Cytoplasmic-facing. Residues serine 505, serine 506, serine 518, serine 543, and serine 551 each carry the phosphoserine modification. Residues proline 531 to methionine 553 form a disordered region. A compositionally biased stretch (polar residues) spans glutamine 537 to threonine 546.

It belongs to the dicarboxylate/amino acid:cation symporter (DAACS) (TC 2.A.23) family. SLC1A5 subfamily. Homotrimer. As to expression, highly expressed in adipose tissue. Detected in lung, skeletal muscle, large intestine, kidney and testis. Expressed in lung, brain, kidney and neural retina (at protein level). Expressed in Mueller cells (at protein level).

The protein localises to the cell membrane. Its subcellular location is the melanosome. The catalysed reaction is L-glutamine(out) + L-serine(in) + Na(+)(out) = L-glutamine(in) + L-serine(out) + Na(+)(in). It carries out the reaction L-glutamine(in) + L-serine(out) + Na(+)(out) = L-glutamine(out) + L-serine(in) + Na(+)(in). The enzyme catalyses L-threonine(in) + L-glutamine(out) + Na(+)(out) = L-threonine(out) + L-glutamine(in) + Na(+)(in). It catalyses the reaction L-threonine(out) + L-glutamine(in) + Na(+)(out) = L-threonine(in) + L-glutamine(out) + Na(+)(in). The catalysed reaction is L-asparagine(in) + L-glutamine(out) + Na(+)(out) = L-asparagine(out) + L-glutamine(in) + Na(+)(in). It carries out the reaction L-asparagine(out) + L-glutamine(in) + Na(+)(out) = L-asparagine(in) + L-glutamine(out) + Na(+)(in). The enzyme catalyses L-glutamine(in) + L-alanine(out) + Na(+)(out) = L-glutamine(out) + L-alanine(in) + Na(+)(in). It catalyses the reaction L-valine(out) + L-glutamine(in) + Na(+)(out) = L-valine(in) + L-glutamine(out) + Na(+)(in). The catalysed reaction is L-glutamine(in) + L-methionine(out) + Na(+)(out) = L-glutamine(out) + L-methionine(in) + Na(+)(in). It carries out the reaction L-glutamine(in) + L-glutamate(out) + Na(+)(out) + H(+)(out) = L-glutamine(out) + L-glutamate(in) + Na(+)(in) + H(+)(in). The enzyme catalyses D-serine(in) + L-glutamine(out) + Na(+)(out) = D-serine(out) + L-glutamine(in) + Na(+)(in). It catalyses the reaction D-serine(in) + L-alanine(out) + Na(+)(out) = D-serine(out) + L-alanine(in) + Na(+)(in). The catalysed reaction is nitrate(in) = nitrate(out). It carries out the reaction iodide(out) = iodide(in). The enzyme catalyses thiocyanate(in) = thiocyanate(out). Down-regulated at acidic pH, with the exception of L-glutamate transport which is up-regulated instead. Sodium-coupled antiporter of neutral amino acids. In a tri-substrate transport cycle, exchanges neutral amino acids between the extracellular and intracellular compartments, coupled to the inward cotransport of at least one sodium ion. The preferred substrate is the essential amino acid L-glutamine, a precursor for biosynthesis of proteins, nucleotides and amine sugars as well as an alternative fuel for mitochondrial oxidative phosphorylation. Exchanges L-glutamine with other neutral amino acids such as L-serine, L-threonine and L-asparagine in a bidirectional way. Provides L-glutamine to proliferating stem and activated cells driving the metabolic switch toward cell differentiation. The transport cycle is usually pH-independent, with the exception of L-glutamate. Transports extracellular L-glutamate coupled to the cotransport of one proton and one sodium ion in exchange for intracellular L-glutamine counter-ion. May provide for L-glutamate uptake in glial cells regulating glutamine/glutamate cycle in the nervous system. Can transport D-amino acids. Mediates D-serine release from the retinal glia potentially affecting NMDA receptor function in retinal neurons. Displays sodium- and amino acid-dependent but uncoupled channel-like anion conductance with a preference SCN(-) &gt;&gt; NO3(-) &gt; I(-) &gt; Cl(-). Through binding of the fusogenic protein syncytin-1/ERVW-1 may mediate trophoblasts syncytialization, the spontaneous fusion of their plasma membranes, an essential process in placental development. This is Neutral amino acid transporter B(0) (Slc1a5) from Mus musculus (Mouse).